The primary structure comprises 279 residues: Lyso-glycine lipid O-acyltransferase (279 aa).

The protein belongs to the O-acyltransferase GlsA family.

The catalysed reaction is a lyso-glycine lipid + a fatty acyl-[ACP] = a glycine lipid + holo-[ACP]. It carries out the reaction N-[(3R)-3-hydroxyhexadecanoyl]-glycine + hexadecanoyl-[ACP] = N-[(3R)-3-(hexadecanoyloxy)hexadecanoyl]-glycine + holo-[ACP]. Its pathway is lipid metabolism. Is involved in the production of glycine lipids (GL), which are phosphorus-free membrane lipids. Catalyzes the second step of GL biosynthesis, i.e. the O-acylation of the hydroxyl group of lyso-glycine lipids, resulting in the production of the mature diacylated glycine lipids. This Phocaeicola vulgatus (strain ATCC 8482 / DSM 1447 / JCM 5826 / CCUG 4940 / NBRC 14291 / NCTC 11154) (Bacteroides vulgatus) protein is Lyso-glycine lipid O-acyltransferase.